A 395-amino-acid chain; its full sequence is ATP synthase subunit a (395 aa).

Helical transmembrane passes span 153 to 173, 246 to 266, 273 to 293, 313 to 333, and 339 to 359; these read FTNP…LVYF, HFLI…IVGF, FLSF…LVLL, MMAG…MLCM, and FIGD…ELGV.

It belongs to the ATPase A chain family. As to quaternary structure, F-type ATPases have 2 components, CF(1) - the catalytic core - and CF(0) - the membrane proton channel. CF(1) has five subunits: alpha(3), beta(3), gamma(1), delta(1), epsilon(1). CF(0) has three main subunits: a, b and c.

Its subcellular location is the mitochondrion inner membrane. In terms of biological role, mitochondrial membrane ATP synthase (F(1)F(0) ATP synthase or Complex V) produces ATP from ADP in the presence of a proton gradient across the membrane which is generated by electron transport complexes of the respiratory chain. F-type ATPases consist of two structural domains, F(1) - containing the extramembraneous catalytic core and F(0) - containing the membrane proton channel, linked together by a central stalk and a peripheral stalk. During catalysis, ATP synthesis in the catalytic domain of F(1) is coupled via a rotary mechanism of the central stalk subunits to proton translocation. Key component of the proton channel; it may play a direct role in the translocation of protons across the membrane. This chain is ATP synthase subunit a (ATP6), found in Nicotiana tabacum (Common tobacco).